The primary structure comprises 1263 residues: Histone-lysine N-methyltransferase EHMT2 (1263 aa).

2 disordered regions span residues 1–314 (MRGL…LEEW) and 332–439 (DERV…EYME). Residues 26-39 (GRGRGGAHRGRGRP) show a composition bias toward basic residues. The residue at position 40 (R40) is an Asymmetric dimethylarginine. The segment covering 83 to 95 (LEKEPRGAAERVH) has biased composition (basic and acidic residues). At S97 the chain carries Phosphoserine. Phosphothreonine is present on T101. S104 and S193 each carry phosphoserine. An N6,N6,N6-trimethyllysine; by EHMT2; alternate modification is found at K239. Residue K239 is modified to N6,N6-dimethyllysine; by EHMT2; alternate. The span at 252–270 (PEKRPPEVQHFRMSDDMHL) shows a compositional bias: basic and acidic residues. Glycyl lysine isopeptide (Lys-Gly) (interchain with G-Cter in SUMO2) cross-links involve residues K272 and K282. A phosphoserine mark is found at S285, S294, and S298. 2 stretches are compositionally biased toward basic and acidic residues: residues 302 to 312 (ILEKGEPRPLE) and 332 to 343 (DERVDSDSKSEV). Positions 350 to 380 (LSEEEEEEEEEEEEEEEEEEEEEEEEEDEES) are enriched in acidic residues. A compositionally biased stretch (basic residues) spans 391 to 400 (GRRKAKKKWR). A phosphoserine mark is found at S403, S465, and S466. T608 carries the post-translational modification Phosphothreonine. A disordered region spans residues 621-647 (LAHDAPGRADTSQPSARMRGHGEPRRP). K687 participates in a covalent cross-link: Glycyl lysine isopeptide (Lys-Gly) (interchain with G-Cter in SUMO2). ANK repeat units follow at residues 702-731 (FHPRQLYLSVKQGELQKVILMLLDNLDPNF), 737-766 (SKRTPLHAAAQKGSVEICHVLLQAGANINA), 770-799 (QQRTPLMEAVVNNHLEVARYMVQLGGCVYS), 803-833 (DGSTCLHHAAKIGNLEMVSLLLSTGQVDVNA), 837-866 (GGWTPIIWAAEHKHIDVIRMLLTRGADVTL), 870-899 (EENICLHWASFTGSAAIAEVLLNAQCDLHA), and 903-932 (HGDTPLHIAARESYHDCVLLFLSRGANPEL). A histone H3K9me binding region spans residues 870-872 (EEN). The Pre-SET domain maps to 1025-1088 (QHCTCVDDCS…SCKNRVVQSG (64 aa)). The Zn(2+) site is built by C1027, C1029, C1033, C1038, C1040, C1070, C1074, C1076, and C1080. In terms of domain architecture, SET spans 1091–1208 (VRLQLYRTAK…TGEELGFDYG (118 aa)). S-adenosyl-L-methionine is bound by residues 1101–1103 (MGW), Y1138, and 1165–1166 (NH). The tract at residues 1127–1146 (DAEADVREDDSYLFDLDNKD) is interaction with histone H3. C1168 contributes to the Zn(2+) binding site. Residues 1207–1210 (YGDR) are interaction with histone H3. Residues 1217–1233 (KYFTCQCGSEKCKHSAE) form the Post-SET domain. Zn(2+) contacts are provided by C1221, C1223, and C1228. Phosphoserine is present on S1257. Position 1263 is a phosphothreonine (T1263).

The protein belongs to the class V-like SAM-binding methyltransferase superfamily. Histone-lysine methyltransferase family. Suvar3-9 subfamily. As to quaternary structure, heterodimer; heterodimerizes with EHMT1/GLP. Interacts with GFI1B and WIZ. Part of the E2F6.com-1 complex in G0 phase composed of E2F6, MGA, MAX, TFDP1, CBX3, BAT8, EHMT1, RING1, RNF2, MBLR, L3MBTL2 and YAF2. Part of a complex composed of TRIM28, HDAC1, HDAC2 and EHMT2. Interacts with UHRF1. Interacts with CDYL. Interacts with REST only in the presence of CDYL. Part of a complex containing at least CDYL, REST, WIZ, SETB1, EHMT1 and EHMT2. Interacts with PRDM9 and CDYL; interaction only takes place when PRDM9 is bound to hotspot DNA. Interacts with SMYD5. Post-translationally, methylated at Lys-239; automethylated. Ubiquitous.

It is found in the nucleus. The protein resides in the chromosome. It catalyses the reaction N(6)-methyl-L-lysyl(9)-[histone H3] + S-adenosyl-L-methionine = N(6),N(6)-dimethyl-L-lysyl(9)-[histone H3] + S-adenosyl-L-homocysteine + H(+). The catalysed reaction is L-lysyl(9)-[histone H3] + S-adenosyl-L-methionine = N(6)-methyl-L-lysyl(9)-[histone H3] + S-adenosyl-L-homocysteine + H(+). In terms of biological role, histone methyltransferase that specifically mono- and dimethylates 'Lys-9' of histone H3 (H3K9me1 and H3K9me2, respectively) in euchromatin. H3K9me represents a specific tag for epigenetic transcriptional repression by recruiting HP1 proteins to methylated histones. Also mediates monomethylation of 'Lys-56' of histone H3 (H3K56me1) in G1 phase, leading to promote interaction between histone H3 and PCNA and regulating DNA replication. Also weakly methylates 'Lys-27' of histone H3 (H3K27me). Also required for DNA methylation, the histone methyltransferase activity is not required for DNA methylation, suggesting that these 2 activities function independently. Probably targeted to histone H3 by different DNA-binding proteins like E2F6, MGA, MAX and/or DP1. May also methylate histone H1. In addition to the histone methyltransferase activity, also methylates non-histone proteins: mediates dimethylation of 'Lys-373' of p53/TP53. Also methylates CDYL, WIZ, ACIN1, DNMT1, HDAC1, ERCC6, KLF12 and itself. The chain is Histone-lysine N-methyltransferase EHMT2 (Ehmt2) from Mus musculus (Mouse).